The primary structure comprises 233 residues: MSTESMIQDVELAEEAFSKTQGPQGSRRRWFLSLFSFLLVAGATALFCLLHFGVIGPQREEQSSRDFSPINSLALAVRSSSRIPSDKPVAHVVANPQAEGQLQWLNRRANALLANGVELRDNQLVVPSDGLYLVYSQVLFKGQGCPSTFTLLTHSISRIAVSYQAKVNLLSAIKSPCQRETPRGAKTHPWYEPIYLGGVFQLEKGDRLSAEISPPDSLDLAESGQVYFGIIAL.

Topologically, residues 1–32 (MSTESMIQDVELAEEAFSKTQGPQGSRRRWFL) are cytoplasmic. S2 carries the post-translational modification Phosphoserine; by CK1. The N6-myristoyl lysine moiety is linked to residue K19. A helical; Signal-anchor for type II membrane protein transmembrane segment spans residues 33-55 (SLFSFLLVAGATALFCLLHFGVI). At 56–233 (GPQREEQSSR…GQVYFGIIAL (178 aa)) the chain is on the extracellular side. O-linked (GalNAc...) serine; in soluble form glycosylation occurs at S80. The 146-residue stretch at 88–233 (PVAHVVANPQ…GQVYFGIIAL (146 aa)) folds into the THD domain. The cysteines at positions 145 and 177 are disulfide-linked.

This sequence belongs to the tumor necrosis factor family. As to quaternary structure, homotrimer. Interacts with SPPL2B. Post-translationally, the soluble form derives from the membrane form by proteolytic processing. The membrane-bound form is further proteolytically processed by SPPL2A or SPPL2B through regulated intramembrane proteolysis producing TNF intracellular domains (ICD1 and ICD2) released in the cytosol and TNF C-domain 1 and C-domain 2 secreted into the extracellular space. In terms of processing, the membrane form, but not the soluble form, is phosphorylated on serine residues. Dephosphorylation of the membrane form occurs by binding to soluble TNFRSF1A/TNFR1. O-glycosylated; glycans contain galactose, N-acetylgalactosamine and N-acetylneuraminic acid. Post-translationally, the soluble form is demyristoylated by SIRT6, promoting its secretion.

The protein resides in the cell membrane. It localises to the membrane. It is found in the secreted. Its function is as follows. Cytokine that binds to TNFRSF1A/TNFR1 and TNFRSF1B/TNFBR. It is mainly secreted by macrophages and can induce cell death of certain tumor cell lines. It is potent pyrogen causing fever by direct action or by stimulation of interleukin-1 secretion and is implicated in the induction of cachexia, Under certain conditions it can stimulate cell proliferation and induce cell differentiation. Induces insulin resistance in adipocytes via inhibition of insulin-induced IRS1 tyrosine phosphorylation and insulin-induced glucose uptake. Induces GKAP42 protein degradation in adipocytes which is partially responsible for TNF-induced insulin resistance. Plays a role in angiogenesis by inducing VEGF production synergistically with IL1B and IL6. Promotes osteoclastogenesis and therefore mediates bone resorption. The TNF intracellular domain (ICD) form induces IL12 production in dendritic cells. This Saimiri sciureus (Common squirrel monkey) protein is Tumor necrosis factor (TNF).